Reading from the N-terminus, the 425-residue chain is Xyloglucan O-acetyltransferase 2 (425 aa).

The Cytoplasmic segment spans residues 1 to 18 (MGSPFKDHHTLHPSLVRK). A helical; Signal-anchor for type II membrane protein transmembrane segment spans residues 19–38 (LIPWTFYAMVPLVLFRVYLY). Residues 39–425 (PYPLHHTTTT…KWEYASRREQ (387 aa)) lie on the Lumenal side of the membrane. 4 disulfide bridges follow: Cys-68-Cys-118, Cys-89-Cys-154, Cys-98-Cys-398, and Cys-313-Cys-394. The N-linked (GlcNAc...) asparagine glycan is linked to Asn-85. The GDS motif signature appears at 141-143 (GDS). The active-site Nucleophile is Ser-143. 2 N-linked (GlcNAc...) asparagine glycosylation sites follow: Asn-183 and Asn-259. Asp-393 functions as the Proton donor in the catalytic mechanism. The short motif at 393-396 (DCVH) is the DXXH motif element. Residue His-396 is the Proton acceptor of the active site.

Belongs to the PC-esterase family. TBL subfamily.

It localises to the golgi apparatus membrane. In terms of biological role, xyloglucan acetyltransferase that catalyzes the acetylation of fucosylated Gal residues on xyloglucan side chains. Predominantly catalyze 6-O-monoacetylation of Gal residues in the Fuc-Gal-Xyl trisaccharide side chains of xyloglucan oligomers. The protein is Xyloglucan O-acetyltransferase 2 of Populus trichocarpa (Western balsam poplar).